Consider the following 649-residue polypeptide: MAPGEKIKAKIKKNLPVTGPQAPTIKELMRWYCLNTNTHGCRRIVVSRGRLRRLLWIGFTLTAVALILWQCALLVFSFYTVSVSIKVHFRKLDFPAVTICNINPYKYSTVRHLLADLEQETREALKSLYGFPESRKRREAESWNSVSEGKQPRFSHRIPLLIFDQDEKGKARDFFTGRKRKVGGSIIHKASNVMHIESKQVVGFQLCSNDTSDCATYTFSSGINAIQEWYKLHYMNIMAQVPLEKKINMSYSAEELLVTCFFDGVSCDARNFTLFHHPMHGNCYTFNNRENETILSTSMGGSEYGLQVILYINEEEYNPFLVSSTGAKVIIHRQDEYPFVEDVGTEIETAMVTSIGMHLTESFKLSEPYSQCTEDGSDVPIRNIYNAAYSLQICLHSCFQTKMVEKCGCAQYSQPLPPAANYCNYQQHPNWMYCYYQLHRAFVQEELGCQSVCKEACSFKEWTLTTSLAQWPSVVSEKWLLPVLTWDQGRQVNKKLNKTDLAKLLIFYKDLNQRSIMESPANSIEMLLSNFGGQLGLWMSCSVVCVIEIIEVFFIDFFSIIARRQWQKAKEWWAWKQAPPCPEAPRSPQGQDNPALDIDDDLPTFNSALHLPPALGTQVPGTPPPKYNTLRLERAFSNQLTDTQMLDEL.

Residues 1–55 (MAPGEKIKAKIKKNLPVTGPQAPTIKELMRWYCLNTNTHGCRRIVVSRGRLRRLL) lie on the Cytoplasmic side of the membrane. Residues 56-76 (WIGFTLTAVALILWQCALLVF) traverse the membrane as a helical segment. The Extracellular segment spans residues 77–541 (SFYTVSVSIK…GGQLGLWMSC (465 aa)). Intrachain disulfides connect cysteine 100–cysteine 283, cysteine 207–cysteine 214, cysteine 260–cysteine 267, cysteine 372–cysteine 457, cysteine 394–cysteine 453, cysteine 398–cysteine 449, cysteine 407–cysteine 434, and cysteine 409–cysteine 423. Positions 135–221 (RKRREAESWN…SDCATYTFSS (87 aa)) are gating release of inhibition by proteolysis (GRIP); protease-sensitive region that is responsible for the proteolytic activation of the channel. Residue asparagine 209 is glycosylated (N-linked (GlcNAc...) asparagine). An N-linked (GlcNAc...) asparagine glycan is attached at asparagine 497. The chain crosses the membrane as a helical span at residues 542–562 (SVVCVIEIIEVFFIDFFSIIA). Over 563-649 (RRQWQKAKEW…LTDTQMLDEL (87 aa)) the chain is Cytoplasmic. Residues 623–627 (PPPKY) carry the PY motif; recruits WW domain-containing proteins and is thereby required for ubiquitination and inhibition of the channel by NEDD4 and NEDD4L motif.

Belongs to the amiloride-sensitive sodium channel (TC 1.A.6) family. SCNN1G subfamily. Component of the heterotrimeric epithelial sodium channel (ENaC) composed of an alpha/SCNN1A, a beta/SCNN1B and a gamma/SCNN1G subunit. An additional delta/SCNN1D subunit can replace the alpha/SCNN1A subunit to form an alternative channel with specific properties. Interacts with WWP1 (via WW domains). Interacts with WWP2 (via WW domains); inhibits the channel. Interacts with the full-length immature form of PCSK9 (pro-PCSK9); inhibits ENaC by promoting its proteasomal degradation. Interacts with BPIFA1; the interaction is indirect via SCNN1B and inhibits the proteolytic maturation of SCNN1A and SCNN1G and the activation of ENaC. In terms of processing, phosphorylated on serine and threonine residues. Aldosterone and insulin increase the basal level of phosphorylation. Post-translationally, ubiquitinated. Can be ubiquitinated at multiple sites and undergo monoubiquitination and polyubiquitination. Ubiquitination by NEDD4 or NEDD4L inhibits the ENaC channel through endocytosis, intracellular retention and degradation of its individual subunits. ENaC is activated through the proteolytic maturation of its subunits. Furin cleaves the SCNN1G subunit first, followed by cleavage by prostasin (PRSS8), which results in a stepwise increase in the open probability of the channel due to the release of an inhibitory tract. BPIFA1, which is recruited by the SCNN1B subunit, prevents the proteolytic activation of ENaC. In terms of processing, N-glycosylated. N-linked glycans are processed to complex type during ENaC complex assembly and transport to the plasma membrane. As to expression, expressed in kidney (at protein level).

The protein localises to the apical cell membrane. The catalysed reaction is Na(+)(in) = Na(+)(out). With respect to regulation, originally identified and characterized by its inhibition by the diuretic drug amiloride. In terms of biological role, this is one of the three pore-forming subunits of the heterotrimeric epithelial sodium channel (ENaC), a critical regulator of sodium balance and fluid homeostasis. ENaC operates in epithelial tissues, where it mediates the electrodiffusion of sodium ions from extracellular fluid through the apical membrane of cells, with water following osmotically. It plays a key role in maintaining sodium homeostasis through electrogenic sodium reabsorption in the kidneys. Additionally, ENaC is essential for airway surface liquid homeostasis, which is crucial for proper mucus clearance. The chain is Epithelial sodium channel subunit gamma from Homo sapiens (Human).